Consider the following 783-residue polypeptide: Polyribonucleotide nucleotidyltransferase 1, mitochondrial (783 aa).

The transit peptide at 1-45 (MAACRYCCSCLRLRPLSDGPFLLPRRDRALTQLQVRALWSSAGSR) directs the protein to the mitochondrion. Residues K250, K264, K285, and K289 each carry the N6-acetyllysine modification. K552 is modified (N6-succinyllysine). A KH domain is found at 605–664 (PVVETVQVPLSKRAKFVGPGGYNLKKLQAETGVTISQVDEETFSVFAPTPSAMHEARDFI). In terms of domain architecture, S1 motif spans 679 to 750 (GAVYTATITE…ADGRMRLSRK (72 aa)). 2 positions are modified to phosphoserine: S754 and S782.

This sequence belongs to the polyribonucleotide nucleotidyltransferase family. Homotrimer; in free form. Homooligomer. Component of the mitochondrial degradosome (mtEXO) complex which is a heteropentamer containing 2 copies of SUPV3L1 and 3 copies of PNPT1. As part of the mitochondrial degradosome complex, interacts with GRSF1 in an RNA-dependent manner; the interaction enhances the activity of the complex. Interacts with TCL1A; the interaction has no effect on PNPT1 exonuclease activity.

The protein resides in the cytoplasm. It localises to the mitochondrion matrix. The protein localises to the mitochondrion intermembrane space. The enzyme catalyses RNA(n+1) + phosphate = RNA(n) + a ribonucleoside 5'-diphosphate. Functionally, RNA-binding protein implicated in numerous RNA metabolic processes. Catalyzes the phosphorolysis of single-stranded polyribonucleotides processively in the 3'-to-5' direction. Mitochondrial intermembrane factor with RNA-processing exoribonulease activity. Component of the mitochondrial degradosome (mtEXO) complex, that degrades 3' overhang double-stranded RNA with a 3'-to-5' directionality in an ATP-dependent manner. Involved in the degradation of non-coding mitochondrial transcripts (MT-ncRNA) and tRNA-like molecules. Required for correct processing and polyadenylation of mitochondrial mRNAs. Plays a role as a cytoplasmic RNA import factor that mediates the translocation of small RNA components, like the 5S RNA, the RNA subunit of ribonuclease P and the mitochondrial RNA-processing (MRP) RNA, into the mitochondrial matrix. Plays a role in mitochondrial morphogenesis and respiration; regulates the expression of the electron transport chain (ETC) components at the mRNA and protein levels. In the cytoplasm, shows a 3'-to-5' exoribonuclease mediating mRNA degradation activity; degrades c-myc mRNA upon treatment with IFNB1/IFN-beta, resulting in a growth arrest in melanoma cells. Regulates the stability of specific mature miRNAs in melanoma cells; specifically and selectively degrades miR-221, preferentially. Also plays a role in RNA cell surveillance by cleaning up oxidized RNAs. Binds to the RNA subunit of ribonuclease P, MRP RNA and miR-221 microRNA. The sequence is that of Polyribonucleotide nucleotidyltransferase 1, mitochondrial from Homo sapiens (Human).